Here is a 293-residue protein sequence, read N- to C-terminus: Glycine--tRNA ligase alpha subunit (293 aa).

The protein belongs to the class-II aminoacyl-tRNA synthetase family. As to quaternary structure, tetramer of two alpha and two beta subunits.

It is found in the cytoplasm. The catalysed reaction is tRNA(Gly) + glycine + ATP = glycyl-tRNA(Gly) + AMP + diphosphate. The sequence is that of Glycine--tRNA ligase alpha subunit from Acaryochloris marina (strain MBIC 11017).